The primary structure comprises 25 residues: Galactose-binding lectin-2 (25 aa).

As to quaternary structure, homodimer. Post-translationally, N-glycosylated.

D-galactose specific lectin. Binds in decreasing order of affinity: melibiose, N-acetyllactosamine, D-galacturonic acid, D-galactose, methyl-alpha-D-galactoside, D-galactose, methyl-alpha-D-galactopyranoside, methyl-beta-D-galactopyranoside and lactose. Binds also the glycoproteins globotriose, asialofetuin and mucin. Possesses glycan-dependent cytotoxic activity against Burkitt's lymphoma Raji cells and erythroleukemia K562 cells. Has calcium-independent hemagglutinating activity towards human erythrocytes. The protein is Galactose-binding lectin-2 of Aplysia kurodai (Kuroda's sea hare).